The following is a 455-amino-acid chain: Serine--tRNA ligase (455 aa).

L-serine is bound at residue 252-254; the sequence is TAE. ATP is bound by residues 283–285 and V299; that span reads RKE. E306 is a binding site for L-serine. Residue 370-373 participates in ATP binding; that stretch reads EVVS. Residue T406 coordinates L-serine.

The protein belongs to the class-II aminoacyl-tRNA synthetase family. Type-1 seryl-tRNA synthetase subfamily. In terms of assembly, homodimer. The tRNA molecule binds across the dimer.

The protein resides in the cytoplasm. The catalysed reaction is tRNA(Ser) + L-serine + ATP = L-seryl-tRNA(Ser) + AMP + diphosphate + H(+). The enzyme catalyses tRNA(Sec) + L-serine + ATP = L-seryl-tRNA(Sec) + AMP + diphosphate + H(+). It participates in aminoacyl-tRNA biosynthesis; selenocysteinyl-tRNA(Sec) biosynthesis; L-seryl-tRNA(Sec) from L-serine and tRNA(Sec): step 1/1. Its function is as follows. Catalyzes the attachment of serine to tRNA(Ser). Is also able to aminoacylate tRNA(Sec) with serine, to form the misacylated tRNA L-seryl-tRNA(Sec), which will be further converted into selenocysteinyl-tRNA(Sec). This Pyrococcus horikoshii (strain ATCC 700860 / DSM 12428 / JCM 9974 / NBRC 100139 / OT-3) protein is Serine--tRNA ligase.